We begin with the raw amino-acid sequence, 398 residues long: uncharacterized protein (398 aa).

K212 bears the N6-(pyridoxal phosphate)lysine mark.

It belongs to the trans-sulfuration enzymes family. Pyridoxal 5'-phosphate is required as a cofactor.

This is an uncharacterized protein from Schizosaccharomyces pombe (strain 972 / ATCC 24843) (Fission yeast).